The chain runs to 104 residues: Circadian clock oscillator protein KaiB (104 aa).

It belongs to the KaiB family. The KaiABC complex composition changes during the circadian cycle to control KaiC phosphorylation. Complexes KaiC(6), KaiA(2-4):KaiC(6), KaiB(6):KaiC(6) and KaiC(6):KaiB(6):KaiA(12) are among the most important forms, many form cooperatively. Undergoes a major conformational rearrangment; in the free state forms homotetramers as a dimer of dimers. When bound to the CI domain of KaiC switches to a monomeric thioredoxin-fold (KaiB(fs)). KaiB(fs) binds CikA, leading it to dephosphorylate phospho-RpaA.

Its function is as follows. Key component of the KaiABC oscillator complex, which constitutes the main circadian regulator in cyanobacteria. Complex composition changes during the circadian cycle to control KaiC phosphorylation. KaiA stimulates KaiC autophosphorylation, while KaiB sequesters KaiA, leading to KaiC autodephosphorylation. Phospho-Ser-431 KaiC accumulation triggers binding of KaiB to form the KaiB(6):KaiC(6) complex, leading to changes in output regulators CikA and SasA. KaiB switches to a thioredoxin-like fold (KaiB(fs)) when bound to KaiC. KaiB(6):KaiC(6) formation exposes a site for KaiA binding that sequesters KaiA from KaiC, making the KaiC(6):KaiB(6):KaiA(12) complex that results in KaiC autodephosphorylation. In terms of biological role, a metamorphic protein which reversibly switches between an inactive tetrameric fold and a rare, thioredoxin-like monomeric fold (KaiB(fs)). KaiB(fs) binds phospho-KaiC, KaiA and CikA. KaiA and CikA compete for binding to KaiB(fs), and KaiB(fs) and SasA compete for binding to KaiC, thus the clock oscillator and output signal pathway are tightly coupled. The polypeptide is Circadian clock oscillator protein KaiB (Rippkaea orientalis (strain PCC 8801 / RF-1) (Cyanothece sp. (strain PCC 8801))).